A 261-amino-acid polypeptide reads, in one-letter code: MSDILDRIIAVKREEVAAAMRSAPLEALKLEASARDLRDFVGALRAKHAAGHAAVISEIKKASPSKGVLREHFVPADIARSYAEHGAACLSVLTDEQFFQGSVRYLEEARAACTLPVLRKDFIVDAYQIMEARAMGADAILLIAAALDTPLMQDLEAYAHSLGLAVLVEVHDRNEMEQALTLKTPLLGINNRNLRTFETSIQTTLDMLDMIPSDRIVVTESGILSRTDVDTMRAANVNTFLVGEAFMRADQPGEELARMFF.

This sequence belongs to the TrpC family.

It catalyses the reaction 1-(2-carboxyphenylamino)-1-deoxy-D-ribulose 5-phosphate + H(+) = (1S,2R)-1-C-(indol-3-yl)glycerol 3-phosphate + CO2 + H2O. The protein operates within amino-acid biosynthesis; L-tryptophan biosynthesis; L-tryptophan from chorismate: step 4/5. This chain is Indole-3-glycerol phosphate synthase, found in Burkholderia lata (strain ATCC 17760 / DSM 23089 / LMG 22485 / NCIMB 9086 / R18194 / 383).